The primary structure comprises 401 residues: ADP-forming sulfoacetate-CoA ligase subunit SqwK (401 aa).

In terms of domain architecture, ATP-grasp spans 9–217; it reads KTVFSEHKIP…DNSVFRQPRF (209 aa). 35 to 96 lines the ATP pocket; it reads KSVGFPSVVK…EEAVHIDKEI (62 aa). Residues Glu-185 and Asn-187 each contribute to the Mg(2+) site.

The protein belongs to the succinate/malate CoA ligase beta subunit family. As to quaternary structure, forms a complex with SqwL. It depends on Mg(2+) as a cofactor.

It carries out the reaction sulfoacetate + ATP + CoA = sulfoacetyl-CoA + ADP + phosphate. In terms of biological role, part of a variant of the sulfo-TK pathway, a D-sulfoquinovose degradation pathway that produces sulfoacetate. Hydrolyzes sulfoacetyl-coenzyme A (sulfoacetyl-CoA) to produce sulfoacetate and CoA coupled with the phosphorylation of ADP to generate ATP. Cannot use succinate, acetate or 3-hydroxypropionate, and shows only residual activities with malonate and 3-sulfopropanoate. This chain is ADP-forming sulfoacetate-CoA ligase subunit SqwK, found in Acholeplasma sp.